The primary structure comprises 249 residues: BPI fold-containing family A member 1 (249 aa).

An N-terminal signal peptide occupies residues 1–15; it reads MFQVAGLIVFCGLLA. The segment at 81-86 is important for surfactant activity and antibacterial properties; the sequence is LLGGLL. Asn151 carries an N-linked (GlcNAc...) asparagine glycan. The cysteines at positions 173 and 217 are disulfide-linked.

Belongs to the BPI/LBP/Plunc superfamily. Plunc family. In terms of assembly, monomer. Interacts (via N-terminus) with SCNN1B, a subunit of the heterotrimeric epithelial sodium channel (ENaC); this inhibits proteolytic activation of ENaC. As to expression, expressed in lung and trachea.

It is found in the secreted. Functionally, lipid-binding protein which shows high specificity for the surfactant phospholipid dipalmitoylphosphatidylcholine (DPPC). Plays a role in the innate immune responses of the upper airways. Reduces the surface tension in secretions from airway epithelia and inhibits the formation of biofilm by pathogenic Gram-negative bacteria, such as P.aeruginosa and K.pneumoniae. Negatively regulates proteolytic cleavage of SCNN1G, an event that is required for activation of the epithelial sodium channel (ENaC), and thereby contributes to airway surface liquid homeostasis and proper clearance of mucus. Plays a role in the airway inflammatory response after exposure to irritants. May attract macrophages and neutrophils. In Sus scrofa (Pig), this protein is BPI fold-containing family A member 1 (BPIFA1).